Here is a 6061-residue protein sequence, read N- to C-terminus: Intermembrane lipid transfer protein vps13B (6061 aa).

Residues F2 to E115 enclose the Chorein N-terminal domain. Disordered stretches follow at residues P590 to K623, D803 to N828, Q1386 to S1414, S1604 to S1644, Q2747 to E2784, G2950 to T2972, L3364 to D3401, Q3855 to K3876, Q4011 to N4068, E4107 to E4132, N4262 to R4297, S4321 to G4442, T4601 to L4631, N4753 to F4797, N4861 to Q4882, L5003 to E5030, and N5372 to D5429. Over residues H595–N614 the composition is skewed to basic and acidic residues. Residues Q1395–E1406 are compositionally biased toward basic and acidic residues. The segment covering Q2747 to R2756 has biased composition (polar residues). The span at N2774–E2784 shows a compositional bias: acidic residues. Acidic residues predominate over residues I3388–D3401. Residues Q4015–E4024 show a composition bias toward basic and acidic residues. Positions L4031–N4040 are enriched in low complexity. Residues D4041 to N4057 show a composition bias toward acidic residues. The span at N4058–N4068 shows a compositional bias: low complexity. The span at E4107–K4120 shows a compositional bias: basic and acidic residues. Composition is skewed to low complexity over residues T4330–N4383 and N4399–N4429. Positions S4430–P4441 are enriched in polar residues. 2 stretches are compositionally biased toward low complexity: residues T4601 to N4617 and N4753 to N4784. Positions S4785–T4794 are enriched in polar residues. Low complexity-rich tracts occupy residues D5013 to E5030 and N5372 to N5384. Positions N5385 to N5409 are enriched in basic and acidic residues. Over residues N5410–N5421 the composition is skewed to low complexity.

This sequence belongs to the VPS13 family.

Its subcellular location is the membrane. In terms of biological role, mediates the transfer of lipids between membranes at organelle contact sites. This is Intermembrane lipid transfer protein vps13B (vps13B) from Dictyostelium discoideum (Social amoeba).